We begin with the raw amino-acid sequence, 1778 residues long: Ankyrin repeat domain-containing protein 36C (1778 aa).

ANK repeat units lie at residues 64-93, 97-126, 130-159, 163-192, and 196-225; these read KERTALHLACATGQPEMVHLLVSRRCELNL, EDRTPLIKAVQLRQEACATLLLQNGADPNI, FGRTALHYAVYNEDTSMIEKLLSYGANIEE, DEYPPLFLAVSQRKVKMVEFLLKKKANINA, and LGRSALIHAVTLGEKDIVILLLQHNIDVFS. 5 disordered regions span residues 260-365, 501-526, 538-653, 671-1027, and 1051-1072; these read LSIN…DEQK, ALPATGQKANVSPEQPPLFTHTVKDS, DSLT…QKQS, RITG…QKQL, and IRGTVSSQRQPALKATGDEKDS. Polar residues-rich tracts occupy residues 261–272 and 297–306; these read SINSNPVSSQKQ and KSGTVSSQKQ. Residues 539–555 are compositionally biased toward low complexity; the sequence is SLTSSEESSERPPLSTL. 2 stretches are compositionally biased toward basic and acidic residues: residues 585–596 and 619–630; these read PAEKATSDDKDS and PAEKATSDEKDS. Polar residues-rich tracts occupy residues 631–653 and 679–691; these read VSNIATEIKEGQQSGTVSPQKQS and GTVSSQKQPPSKA. Basic and acidic residues predominate over residues 794–813; it reads TSDEKDSFSNITREKKDGEI. Ser829 carries the phosphoserine modification. Composition is skewed to basic and acidic residues over residues 840–849 and 862–881; these read RGKEDGEKTR and TSDEKDSFSNITREKKDGET. Ser897 carries the post-translational modification Phosphoserine. Positions 907-917 are enriched in basic and acidic residues; sequence AREKKDGEKSR. Over residues 942-955 the composition is skewed to basic residues; sequence RGKKHGEKTRRVSS. 2 stretches are compositionally biased toward polar residues: residues 983 to 992 and 1005 to 1026; these read ISGTVSSQKQ and VSNIPTEIKDGQQSGTVSSQKQ. Coiled-coil stretches lie at residues 1157-1187, 1247-1333, 1362-1480, and 1544-1768; these read EQDLEMASEGEQKRLEEYENNQPQVKNQIHS, ELKD…YRIE, SETD…DHDQ, and VFEH…ILQH.

The protein belongs to the ANKRD36 family.

This chain is Ankyrin repeat domain-containing protein 36C (ANKRD36C), found in Homo sapiens (Human).